The following is a 507-amino-acid chain: ATP synthase subunit alpha (507 aa).

Residue 168–175 (GDRQTGKT) participates in ATP binding.

Belongs to the ATPase alpha/beta chains family. As to quaternary structure, F-type ATPases have 2 components, CF(1) - the catalytic core - and CF(0) - the membrane proton channel. CF(1) has five subunits: alpha(3), beta(3), gamma(1), delta(1), epsilon(1). CF(0) has three main subunits: a(1), b(2) and c(9-12). The alpha and beta chains form an alternating ring which encloses part of the gamma chain. CF(1) is attached to CF(0) by a central stalk formed by the gamma and epsilon chains, while a peripheral stalk is formed by the delta and b chains.

The protein localises to the cell membrane. It catalyses the reaction ATP + H2O + 4 H(+)(in) = ADP + phosphate + 5 H(+)(out). Functionally, produces ATP from ADP in the presence of a proton gradient across the membrane. The alpha chain is a regulatory subunit. The chain is ATP synthase subunit alpha from Mesomycoplasma hyopneumoniae (strain 232) (Mycoplasma hyopneumoniae).